Consider the following 1451-residue polypeptide: ABC transporter G family member 32 (1451 aa).

The region spanning 162–435 (GNALHISPTR…FELMGFRCPQ (274 aa)) is the ABC transporter 1 domain. An ATP-binding site is contributed by 195–202 (GPPGSGKT). The ABC transmembrane type-2 1 domain occupies 513–725 (ALLKANIDRE…AQNAISTNEF (213 aa)). 6 helical membrane-spanning segments follow: residues 531 to 551 (FVYIFKAANLTLTAFLVMTTF), 563 to 583 (GTIYMGALYFALDTIMFNGFA), 618 to 638 (IPVTFFEVGVYVFTTYYVVGF), 650 to 670 (LLLVALNQMSSSLFRFIAGIG), 674 to 694 (VVSQTFGPLSLLAFTALGGFI), and 760 to 780 (IGFGALIGYTLLFNLLYTVAL). The interval 809–835 (ILDSCEEKKSRKKEQSQSVNQKHWNNT) is disordered. Residues 813–823 (CEEKKSRKKEQ) are compositionally biased toward basic and acidic residues. The 253-residue stretch at 853 to 1105 (LSFNDIKYSV…KLIEYFEGIE (253 aa)) folds into the ABC transporter 2 domain. An ATP-binding site is contributed by 898–905 (GVSGAGKT). Residues 1178 to 1392 (TQCIACLWKH…TLYGLVASQF (215 aa)) form the ABC transmembrane type-2 2 domain. The next 7 membrane-spanning stretches (helical) occupy residues 1197–1217 (YTAVRLLFTIIIALLFGTMFW), 1237–1257 (YAAVLYIGIQNSGCVQPVVVV), 1285–1305 (LPYILVQTLVYGVLVYSMIGF), 1312–1332 (FIWYLFFMYFTLLYFTFFGMM), 1342–1362 (IAAIISPAIYNAWNLFSGYLI), 1373–1393 (WYCWICPVAWTLYGLVASQFG), and 1423–1443 (LVAVVHVVFTVMFAFLFSFAI).

It belongs to the ABC transporter superfamily. ABCG family. PDR (TC 3.A.1.205) subfamily.

It is found in the membrane. Functionally, may be a general defense protein. This Oryza sativa subsp. japonica (Rice) protein is ABC transporter G family member 32.